A 663-amino-acid chain; its full sequence is Drug sensory protein A (663 aa).

Transmembrane regions (helical) follow at residues 32-52, 165-185, and 199-219; these read LMAA…FWAV, VFIP…GINP, and VTIA…VFNA. The HAMP domain occupies 220-272; that stretch reads LTITQPIKELLLGVKNIAAGNFKQRITLPFGGELGELIVNFNEMAERLERYEA. A PAS domain is found at 281–351; that stretch reads EKAKLDTLVS…QPLRELAADQ (71 aa). A Histidine kinase domain is found at 429–656; the sequence is NVSHELRTPL…TFWFDLAVYQ (228 aa). A Phosphohistidine; by autocatalysis modification is found at histidine 432.

The protein resides in the cell membrane. The enzyme catalyses ATP + protein L-histidine = ADP + protein N-phospho-L-histidine.. This Synechocystis sp. (strain ATCC 27184 / PCC 6803 / Kazusa) protein is Drug sensory protein A (dspA).